The chain runs to 284 residues: Bifunctional protein FolD (284 aa).

NADP(+) contacts are provided by residues 165 to 167 (GRS), serine 190, and valine 231.

The protein belongs to the tetrahydrofolate dehydrogenase/cyclohydrolase family. In terms of assembly, homodimer.

It catalyses the reaction (6R)-5,10-methylene-5,6,7,8-tetrahydrofolate + NADP(+) = (6R)-5,10-methenyltetrahydrofolate + NADPH. It carries out the reaction (6R)-5,10-methenyltetrahydrofolate + H2O = (6R)-10-formyltetrahydrofolate + H(+). Its pathway is one-carbon metabolism; tetrahydrofolate interconversion. Catalyzes the oxidation of 5,10-methylenetetrahydrofolate to 5,10-methenyltetrahydrofolate and then the hydrolysis of 5,10-methenyltetrahydrofolate to 10-formyltetrahydrofolate. In Ruminiclostridium cellulolyticum (strain ATCC 35319 / DSM 5812 / JCM 6584 / H10) (Clostridium cellulolyticum), this protein is Bifunctional protein FolD.